The sequence spans 134 residues: Small ribosomal subunit protein bS6 (134 aa).

Positions 103-134 (AAPVKSAEEGTEEVAAEAATEAPAETTTTVEV) are disordered. Low complexity predominate over residues 118–134 (AEAATEAPAETTTTVEV).

It belongs to the bacterial ribosomal protein bS6 family.

Functionally, binds together with bS18 to 16S ribosomal RNA. This chain is Small ribosomal subunit protein bS6, found in Geobacter sp. (strain M21).